Here is a 194-residue protein sequence, read N- to C-terminus: Interleukin-17C (194 aa).

A signal peptide spans 1–16 (MSLLLLGWLPTGMTHQ). Cystine bridges form between Cys125-Cys185 and Cys130-Cys187.

It belongs to the IL-17 family. Binds to a heterodimer formed by IL17RA and IL17RE. Expressed by epithelial cells after bacterial challenge. Low expression, if any, in lymphocytes.

It localises to the secreted. In terms of biological role, cytokine that plays a crucial role in innate immunity of the epithelium, including to intestinal bacterial pathogens, in an autocrine manner. Stimulates the production of antibacterial peptides and pro-inflammatory molecules for host defense by signaling through the NFKB and MAPK pathways. Acts synergically with IL22, TNF and IL1B in inducing antibacterial peptides. May have protective function by maintaining epithelial homeostasis after an inflammatory challenge, such as that caused in the intestine by dextran sulfate sodium in a colitis model. May also promote an inflammatory phenotype, such as skin in a psoriasis model. Enhanced IL17C/IL17RE signaling may also lead to greater susceptibility to autoimmune diseases, such as autoimmune encephalitis. In Mus musculus (Mouse), this protein is Interleukin-17C (Il17c).